The sequence spans 126 residues: Holo-[acyl-carrier-protein] synthase (126 aa).

2 residues coordinate Mg(2+): Asp-9 and Glu-58.

This sequence belongs to the P-Pant transferase superfamily. AcpS family. It depends on Mg(2+) as a cofactor.

The protein resides in the cytoplasm. The catalysed reaction is apo-[ACP] + CoA = holo-[ACP] + adenosine 3',5'-bisphosphate + H(+). Functionally, transfers the 4'-phosphopantetheine moiety from coenzyme A to a Ser of acyl-carrier-protein. The polypeptide is Holo-[acyl-carrier-protein] synthase (Buchnera aphidicola subsp. Cinara cedri (strain Cc)).